The sequence spans 295 residues: Fructose-bisphosphate aldolase class 1 (295 aa).

Glutamate 176 serves as the catalytic Proton acceptor. Lysine 213 serves as the catalytic Schiff-base intermediate with dihydroxyacetone-P.

It belongs to the class I fructose-bisphosphate aldolase family.

The enzyme catalyses beta-D-fructose 1,6-bisphosphate = D-glyceraldehyde 3-phosphate + dihydroxyacetone phosphate. Its pathway is carbohydrate degradation; glycolysis; D-glyceraldehyde 3-phosphate and glycerone phosphate from D-glucose: step 4/4. The protein is Fructose-bisphosphate aldolase class 1 of Fusobacterium nucleatum subsp. nucleatum (strain ATCC 25586 / DSM 15643 / BCRC 10681 / CIP 101130 / JCM 8532 / KCTC 2640 / LMG 13131 / VPI 4355).